A 419-amino-acid chain; its full sequence is D(4) dopamine receptor (419 aa).

Residues Met1–Gly29 are Extracellular-facing. The N-linked (GlcNAc...) asparagine glycan is linked to Asn3. A helical membrane pass occupies residues Leu30–Ala50. Residues Gly51–Ser71 lie on the Cytoplasmic side of the membrane. Residues Phe72–Val92 form a helical membrane-spanning segment. Asp80 is a binding site for Na(+). The Extracellular portion of the chain corresponds to Tyr93–Ala110. A disulfide bridge connects residues Cys108 and Cys185. The helical transmembrane segment at Leu111–Val131 threads the bilayer. Asp115 provides a ligand contact to (2R,3R)-nemonapride. Position 122 (Ser122) interacts with Na(+). The Cytoplasmic segment spans residues Asp132–Gln152. The chain crosses the membrane as a helical span at residues Leu153 to Gly173. The Extracellular portion of the chain corresponds to Leu174–Tyr192. A helical membrane pass occupies residues Val193–Trp213. Ser196 serves as a coordination point for (2R,3R)-nemonapride. Residues Ala214 to Arg346 are Cytoplasmic-facing. The tract at residues Leu230–Pro264 is disordered. A compositionally biased stretch (pro residues) spans Pro238–Pro254. Residues Pro249–Pro264 form a 1; approximate repeat. Residues Pro249 to Pro312 form a 4 X 16 AA approximate tandem repeats of [PA]-A-P-G-L-P-[PQR]-[DG]-P-C-G-P-D-C-A-P region. Tandem repeats lie at residues Pro265–Pro280 and Ala281–Pro296. The 4; approximate repeat unit spans residues Pro297–Pro312. The interval Arg317–Lys336 is disordered. A helical membrane pass occupies residues Val347–Ile367. At Thr368–Val382 the chain is on the extracellular side. A disulfide bond links Cys372 and Cys375. Residues Ser383 to Phe403 traverse the membrane as a helical segment. The Cytoplasmic segment spans residues Asn404 to Cys419. The S-palmitoyl cysteine moiety is linked to residue Cys419.

Belongs to the G-protein coupled receptor 1 family. As to quaternary structure, forms homo- and heterooligomers with DRD2. D4.7 allele exhibits higher affinity for homodimers compared to DRD2 heterodimers, while alleles D42. and 4.4 have similar affinities for both. The interaction with DRD2 may modulate agonist-induced downstream signaling. Interacts with CLIC6. Interacts with GPRASP1. May interact with ADORA2A. Interacts with KLHL12. Post-translationally, polyubiquitinated by the BCR(KLHL12) E3 ubiquitin ligase complex: polyubiquitination does not lead to degradation of DRD4 protein. In terms of processing, palmitoylated. Palmitoylation of the C-terminal Cys is important for normal expression at the cell membrane. In terms of tissue distribution, highly expressed in retina. Detected at much lower levels in brain, in amygdala, thalamus, hypothalamus, cerebellum and pituitary.

It localises to the cell membrane. With respect to regulation, signaling in response to agonists such as dopamine, epinephrine and norepinephrine is modulated by Na(+); lower Na(+) levels result in higher receptor activity (in vitro). Functionally, dopamine receptor responsible for neuronal signaling in the mesolimbic system of the brain, an area of the brain that regulates emotion and complex behavior. Activated by dopamine, but also by epinephrine and norepinephrine, and by numerous synthetic agonists and drugs. Agonist binding triggers signaling via G proteins that inhibit adenylyl cyclase. Modulates the circadian rhythm of contrast sensitivity by regulating the rhythmic expression of NPAS2 in the retinal ganglion cells. This Homo sapiens (Human) protein is D(4) dopamine receptor (DRD4).